The sequence spans 142 residues: Putative pre-16S rRNA nuclease (142 aa).

Belongs to the YqgF nuclease family.

Its subcellular location is the cytoplasm. Its function is as follows. Could be a nuclease involved in processing of the 5'-end of pre-16S rRNA. This chain is Putative pre-16S rRNA nuclease, found in Lactobacillus helveticus (strain DPC 4571).